We begin with the raw amino-acid sequence, 202 residues long: DNA polymerase III subunit epsilon (202 aa).

A divalent metal cation is bound by residues Asp23 and Glu25. Substrate contacts are provided by Asp23 and Glu25. His162 (proton acceptor) is an active-site residue. Asp167 is a binding site for a divalent metal cation. A substrate-binding site is contributed by Asp167.

DNA polymerase III contains a core (composed of alpha, epsilon and theta chains) that associates with a tau subunit. This core dimerizes to form the POLIII' complex. PolIII' associates with the gamma complex (composed of gamma, delta, delta', psi and chi chains) and with the beta chain to form the complete DNA polymerase III complex. Mg(2+) serves as cofactor. The cofactor is Mn(2+).

The enzyme catalyses DNA(n) + a 2'-deoxyribonucleoside 5'-triphosphate = DNA(n+1) + diphosphate. DNA polymerase III is a complex, multichain enzyme responsible for most of the replicative synthesis in bacteria. The epsilon subunit contain the editing function and is a proofreading 3'-5' exonuclease. The polypeptide is DNA polymerase III subunit epsilon (dnaQ) (Aquifex aeolicus (strain VF5)).